The primary structure comprises 422 residues: GTPase Obg (422 aa).

The Obg domain occupies L4–L161. In terms of domain architecture, OBG-type G spans A162–Q327. Residues G168–S175, F193–K197, D214–G217, N281–D284, and S308–V310 each bind GTP. 2 residues coordinate Mg(2+): S175 and T195. Residues T345–L422 enclose the OCT domain.

It belongs to the TRAFAC class OBG-HflX-like GTPase superfamily. OBG GTPase family. As to quaternary structure, monomer. The cofactor is Mg(2+).

It is found in the cytoplasm. In terms of biological role, an essential GTPase which binds GTP, GDP and possibly (p)ppGpp with moderate affinity, with high nucleotide exchange rates and a fairly low GTP hydrolysis rate. Plays a role in control of the cell cycle, stress response, ribosome biogenesis and in those bacteria that undergo differentiation, in morphogenesis control. The sequence is that of GTPase Obg from Onion yellows phytoplasma (strain OY-M).